We begin with the raw amino-acid sequence, 620 residues long: 1-deoxy-D-xylulose-5-phosphate synthase (620 aa).

Residues His-80 and 121-123 (GHS) each bind thiamine diphosphate. Residue Asp-152 participates in Mg(2+) binding. Thiamine diphosphate-binding positions include 153-154 (GA), Asn-181, Tyr-288, and Glu-370. Asn-181 contacts Mg(2+).

It belongs to the transketolase family. DXPS subfamily. In terms of assembly, homodimer. Mg(2+) is required as a cofactor. Thiamine diphosphate serves as cofactor.

It carries out the reaction D-glyceraldehyde 3-phosphate + pyruvate + H(+) = 1-deoxy-D-xylulose 5-phosphate + CO2. It participates in metabolic intermediate biosynthesis; 1-deoxy-D-xylulose 5-phosphate biosynthesis; 1-deoxy-D-xylulose 5-phosphate from D-glyceraldehyde 3-phosphate and pyruvate: step 1/1. In terms of biological role, catalyzes the acyloin condensation reaction between C atoms 2 and 3 of pyruvate and glyceraldehyde 3-phosphate to yield 1-deoxy-D-xylulose-5-phosphate (DXP). The polypeptide is 1-deoxy-D-xylulose-5-phosphate synthase (Escherichia coli (strain K12 / MC4100 / BW2952)).